The sequence spans 94 residues: Co-chaperonin GroES (94 aa).

It belongs to the GroES chaperonin family. As to quaternary structure, heptamer of 7 subunits arranged in a ring. Interacts with the chaperonin GroEL.

Its subcellular location is the cytoplasm. Its function is as follows. Together with the chaperonin GroEL, plays an essential role in assisting protein folding. The GroEL-GroES system forms a nano-cage that allows encapsulation of the non-native substrate proteins and provides a physical environment optimized to promote and accelerate protein folding. GroES binds to the apical surface of the GroEL ring, thereby capping the opening of the GroEL channel. The polypeptide is Co-chaperonin GroES (Geobacillus sp. (strain WCH70)).